Reading from the N-terminus, the 461-residue chain is Serine/threonine-protein kinase 4 homolog A (461 aa).

The Protein kinase domain maps to phenylalanine 20 to isoleucine 273. ATP contacts are provided by residues leucine 26–valine 34 and lysine 49. Aspartate 139 (proton acceptor) is an active-site residue. Residue threonine 173 is modified to Phosphothreonine; by autocatalysis. Disordered regions lie at residues glycine 303–aspartate 349 and asparagine 369–lysine 388. A compositionally biased stretch (acidic residues) spans arginine 307–aspartate 322. Residues serine 411–lysine 458 form the SARAH domain.

Belongs to the protein kinase superfamily. STE Ser/Thr protein kinase family. STE20 subfamily. Mn(2+) is required as a cofactor. Undergoes autophosphorylation in the catalytic domain.

It is found in the cytoplasm. It localises to the cytosol. It carries out the reaction L-seryl-[protein] + ATP = O-phospho-L-seryl-[protein] + ADP + H(+). It catalyses the reaction L-threonyl-[protein] + ATP = O-phospho-L-threonyl-[protein] + ADP + H(+). Its function is as follows. Regulates both cAMP signaling during early development and the stress response. Functions as an activator of adenylylcyclase. In Dictyostelium discoideum (Social amoeba), this protein is Serine/threonine-protein kinase 4 homolog A (krsA).